A 145-amino-acid chain; its full sequence is Synaptojanin-2-binding protein (145 aa).

Over 1–117 the chain is Cytoplasmic; sequence MNGRVDYLVS…VHRGDGEPSG (117 aa). The region spanning 13–100 is the PDZ domain; sequence EINLTRGPSG…AVSLRVQHRL (88 aa). A helical transmembrane segment spans residues 118-138; sequence VPVAVVLLPVFALTLVAVWAF. The Mitochondrial intermembrane portion of the chain corresponds to 139–145; that stretch reads VRYRKQL.

Binds (via the PDZ domain) to isoform 2A of SYNJ2 (via the unique motif in the C-terminus). Interacts (via C-terminus) with RALBP1. Interacts (via PDZ domain) with ACVR2A (via C-terminus) and ACVR2B (via C-terminus). Forms a ternary complex with ACVR2A and RALBP1. Interacts with MAPK12. Interacts with DLL1; enhances DLL1 protein stability, and promotes notch signaling in endothelial cells. As to expression, widely expressed.

The protein localises to the mitochondrion outer membrane. Its function is as follows. Regulates endocytosis of activin type 2 receptor kinases through the Ral/RALBP1-dependent pathway and may be involved in suppression of activin-induced signal transduction. This chain is Synaptojanin-2-binding protein (Synj2bp), found in Rattus norvegicus (Rat).